Here is a 1033-residue protein sequence, read N- to C-terminus: NACHT, LRR and PYD domains-containing protein 11 (1033 aa).

One can recognise a Pyrin domain in the interval 1–91 (MAESDSTDFD…CRKIIGRRNR (91 aa)). One can recognise an NACHT domain in the interval 147 to 470 (LNVFLMGERA…AFLMAVPNYL (324 aa)). 153–160 (GERASGKT) contributes to the ATP binding site. LRR repeat units lie at residues 588–611 (CCHL…LIRP), 632–655 (MESL…ILSK), 745–768 (GGSL…ILCD), 802–827 (SPTL…TFPL), 859–882 (NEKL…LLCG), and 919–944 (LERL…LISP).

The protein belongs to the NLRP family.

In terms of biological role, involved in inflammation. The sequence is that of NACHT, LRR and PYD domains-containing protein 11 (NLRP11) from Homo sapiens (Human).